The chain runs to 3674 residues: Spectrin beta chain, non-erythrocytic 5 (3674 aa).

A disordered region spans residues 1–37 (MAGQPHSPRELLGAAGHRSRRPSTELRVPPSPSLTMD). The actin-binding stretch occupies residues 1-279 (MAGQPHSPRE…IMTYVSLYYH (279 aa)). Calponin-homology (CH) domains are found at residues 54–159 (QMQE…LRFQ) and 177–282 (LSTK…HYCS). Spectrin repeat units follow at residues 307 to 416 (LQTQ…ALQQ), 428 to 529 (ARRF…RKQV), 642 to 742 (AEFL…ARLQ), 747 to 810 (VLQY…QGRA), 900 to 996 (GFCS…AVQL), 1103 to 1206 (ARQS…WLQE), 1209 to 1311 (ELQK…RQLL), and 1315 to 1417 (QLQE…ELQQ). The tract at residues 1441–1469 (ALQSSETGQDLRSSQRLQKRHQQLESESR) is disordered. The span at 1442–1456 (LQSSETGQDLRSSQR) shows a compositional bias: polar residues. Spectrin repeat units follow at residues 1521-1624 (ELHQ…CLQQ), 1628-1727 (FQQY…RELE), 1731-1835 (RLHE…ALRD), 1842-1940 (VHRD…AQLE), 1944-2046 (LLAR…ERLQ), 2052-2146 (QLFL…HALH), 2150-2253 (LMAS…ELED), 2256-2361 (NFLE…QQLE), 2366-2467 (IHVL…EALD), 2471-2574 (QAQK…QLQQ), 2577-2680 (ELQL…RLEE), 2683-2784 (QLQA…AKLQ), 2791-2890 (RLRR…TALE), 2894-2997 (LLLK…LLQQ), 3000-3103 (EAQQ…GLQE), 3106-3209 (QLHQ…ENLA), 3213-3311 (EVHS…QWLA), 3318-3415 (AFLG…RWQR), and 3422-3488 (LQKL…EQEL). Residues 3533–3641 (TPTMEGSLEF…WWRALGSTAA (109 aa)) enclose the PH domain.

The protein belongs to the spectrin family. As to quaternary structure, probably associates with an alpha chain. Interacts (via C-terminus) with TRPC4. As to expression, expressed at very low levels in many tissues, with strongest expression in cerebellum, spinal cord, stomach, pituitary gland, liver, pancreas, salivary gland, kidney, bladder, and heart.

It localises to the cytoplasm. The protein resides in the cytoskeleton. The protein is Spectrin beta chain, non-erythrocytic 5 (SPTBN5) of Homo sapiens (Human).